Here is a 659-residue protein sequence, read N- to C-terminus: Interferon-induced GTP-binding protein Mx2 (659 aa).

The Dynamin-type G domain occupies 65 to 338; it reads DLALPAIAVI…LISHICKSLP (274 aa). Residues 75 to 82 form a G1 motif region; it reads GDQSSGKS. Residue 75–82 coordinates GTP; sequence GDQSSGKS. Positions 100–102 are G2 motif; it reads VTR. Residues 176–179 form a G3 motif region; sequence DLPG. GTP is bound by residues 176-180 and 245-248; these read DLPGI and TKPD. Residues 245-248 are G4 motif; it reads TKPD. The interval 277-280 is G5 motif; the sequence is KCRG. Residues 547–567 are disordered; it reads EAEEEERKHGKSRSSQSKNLQ. Residues 571-659 enclose the GED domain; sequence MDEIFQHLNA…AQRRLAKFPG (89 aa).

The protein belongs to the TRAFAC class dynamin-like GTPase superfamily. Dynamin/Fzo/YdjA family.

The protein localises to the cytoplasm. In terms of biological role, interferon-induced dynamin-like GTPase with antiviral activity against vesicular stomatitis virus (VSV). In Rattus norvegicus (Rat), this protein is Interferon-induced GTP-binding protein Mx2 (Mx2).